The following is a 350-amino-acid chain: Putative [LysW]-lysine/[LysW]-ornithine hydrolase (350 aa).

Residue histidine 72 participates in Zn(2+) binding. Residue aspartate 74 is part of the active site. Aspartate 96 is a Zn(2+) binding site. The active-site Proton acceptor is the glutamate 128. Zn(2+) is bound by residues glutamate 129, glutamate 152, and histidine 321.

This sequence belongs to the peptidase M20A family. LysK subfamily. It depends on Zn(2+) as a cofactor. Requires Co(2+) as cofactor.

The protein localises to the cytoplasm. The enzyme catalyses [amino-group carrier protein]-C-terminal-gamma-(L-lysyl)-L-glutamate + H2O = [amino-group carrier protein]-C-terminal-L-glutamate + L-lysine. The catalysed reaction is [amino-group carrier protein]-C-terminal-gamma-(L-ornithyl)-L-glutamate + H2O = [amino-group carrier protein]-C-terminal-L-glutamate + L-ornithine. It functions in the pathway amino-acid biosynthesis; L-lysine biosynthesis via AAA pathway; L-lysine from L-alpha-aminoadipate (Thermus route): step 5/5. Its pathway is amino-acid biosynthesis; L-arginine biosynthesis. In terms of biological role, catalyzes the release of L-lysine from [LysW]-gamma-L-lysine and the release of L-ornithine from [LysW]-L-ornithine. This chain is Putative [LysW]-lysine/[LysW]-ornithine hydrolase, found in Aeropyrum pernix (strain ATCC 700893 / DSM 11879 / JCM 9820 / NBRC 100138 / K1).